Here is a 350-residue protein sequence, read N- to C-terminus: GTPase Obg (350 aa).

Residues 1–159 enclose the Obg domain; sequence MKFIDEAKIT…WELALELKVL (159 aa). The tract at residues 17–43 is disordered; that stretch reads GDGSASFRREKYIPKGGPDGGDGGRGG. A compositionally biased stretch (gly residues) spans 33–43; it reads GPDGGDGGRGG. Residues 160 to 334 form the OBG-type G domain; it reads ADVGLLGMPN…LTYAVMDYLG (175 aa). GTP-binding positions include 166-173, 191-195, 213-216, 284-287, and 315-317; these read GMPNAGKS, FTTLA, DIPG, NKLD, and SAL. Ser-173 and Thr-193 together coordinate Mg(2+).

It belongs to the TRAFAC class OBG-HflX-like GTPase superfamily. OBG GTPase family. In terms of assembly, monomer. It depends on Mg(2+) as a cofactor.

The protein resides in the cytoplasm. In terms of biological role, an essential GTPase which binds GTP, GDP and possibly (p)ppGpp with moderate affinity, with high nucleotide exchange rates and a fairly low GTP hydrolysis rate. Plays a role in control of the cell cycle, stress response, ribosome biogenesis and in those bacteria that undergo differentiation, in morphogenesis control. This Thiobacillus denitrificans (strain ATCC 25259 / T1) protein is GTPase Obg.